Reading from the N-terminus, the 298-residue chain is Oxygen-dependent coproporphyrinogen-III oxidase (298 aa).

Position 92 (serine 92) interacts with substrate. Histidine 96 and histidine 106 together coordinate a divalent metal cation. The active-site Proton donor is histidine 106. Substrate is bound at residue 108-110 (NVR). 2 residues coordinate a divalent metal cation: histidine 145 and histidine 175. Residues 239–274 (YVEFNLVYDRGTLFGLQSGGRSESILMSLPPRVRWE) form an important for dimerization region. Residue 257-259 (GGR) coordinates substrate.

It belongs to the aerobic coproporphyrinogen-III oxidase family. Homodimer. A divalent metal cation serves as cofactor.

It localises to the cytoplasm. The enzyme catalyses coproporphyrinogen III + O2 + 2 H(+) = protoporphyrinogen IX + 2 CO2 + 2 H2O. It functions in the pathway porphyrin-containing compound metabolism; protoporphyrin-IX biosynthesis; protoporphyrinogen-IX from coproporphyrinogen-III (O2 route): step 1/1. Its function is as follows. Involved in the heme biosynthesis. Catalyzes the aerobic oxidative decarboxylation of propionate groups of rings A and B of coproporphyrinogen-III to yield the vinyl groups in protoporphyrinogen-IX. This is Oxygen-dependent coproporphyrinogen-III oxidase from Stenotrophomonas maltophilia (strain K279a).